The sequence spans 305 residues: Tetraspanin-12 (305 aa).

Topologically, residues 1–12 are cytoplasmic; it reads MAREDSVKCLRC. S-palmitoyl cysteine attachment occurs at residues Cys-9 and Cys-12. A helical transmembrane segment spans residues 13-33; the sequence is LLYALNLLFWLMSISVLAVSA. Topologically, residues 34–59 are extracellular; sequence WMRDYLNNVLTLTAETRVEEAVILTY. The helical transmembrane segment at 60–80 threads the bilayer; that stretch reads FPVVHPVMIAVCCFLIIVGML. The Cytoplasmic portion of the chain corresponds to 81–89; that stretch reads GYCGTVKRN. Cys-83 is lipidated: S-palmitoyl cysteine. The chain crosses the membrane as a helical span at residues 90-110; it reads LLLLAWYFGTLLVIFCVELAC. Residues 111-224 lie on the Extracellular side of the membrane; it reads GVWTYEQEVM…RGTKQLQVLR (114 aa). Residues 225 to 245 form a helical membrane-spanning segment; sequence FLGISIGVTQILAMILTITLL. The Cytoplasmic segment spans residues 246 to 305; sequence WALYYDRREPGTDQMLSLKNDTSQHLSCHSVELLKPSLSRIFEHTSMANSFNTHFEMEEL.

It belongs to the tetraspanin (TM4SF) family. Interacts (when palmitoylated) with ADAM10. Interacts with MMP14/MT1-MMP. Component of a complex, at least composed of TSPAN12, FZD4 and norrin (NDP). Palmitoylated; required for interaction with ADAM10. Expressed in the neonatal retinal vasculature but not other retinal tissues. Also detected in the neonatal meningeal vasculature and in nonvascular cell types, such as the smooth muscle cells in the neonatal intestine.

The protein localises to the cell membrane. In terms of biological role, regulator of cell surface receptor signal transduction. Acts as a regulator of membrane proteinases such as ADAM10 and MMP14/MT1-MMP. Activates ADAM10-dependent cleavage activity of amyloid precursor protein (APP). Activates MMP14/MT1-MMP-dependent cleavage activity. Plays a central role in retinal vascularization by regulating norrin (NDP) signal transduction. Acts in concert with norrin (NDP) to promote FZD4 multimerization and subsequent activation of FZD4, leading to promote accumulation of beta-catenin (CTNNB1) and stimulate LEF/TCF-mediated transcriptional programs. Suprisingly, it only activate the norrin (NDP)-dependent activation of FZD4, while it does not activate the Wnt-dependent activation of FZD4, suggesting the existence of a Wnt-independent signaling that also promote accumulation the beta-catenin (CTNNB1). In Mus musculus (Mouse), this protein is Tetraspanin-12 (Tspan12).